Here is a 164-residue protein sequence, read N- to C-terminus: Endoribonuclease YbeY (164 aa).

Zn(2+) contacts are provided by His117, His121, and His127.

This sequence belongs to the endoribonuclease YbeY family. The cofactor is Zn(2+).

The protein resides in the cytoplasm. Single strand-specific metallo-endoribonuclease involved in late-stage 70S ribosome quality control and in maturation of the 3' terminus of the 16S rRNA. This chain is Endoribonuclease YbeY, found in Mycoplasma mycoides subsp. mycoides SC (strain CCUG 32753 / NCTC 10114 / PG1).